The following is a 1234-amino-acid chain: Coiled-coil domain-containing protein CG32809 (1234 aa).

Basic and acidic residues predominate over residues 1 to 11; that stretch reads MLIRWKSKDKS. 3 disordered regions span residues 1–88, 107–129, and 330–350; these read MLIR…HAHQ, KNKKNQPMRGYAPVNQGPLFDDD, and KVSMDGYTSSPERSSRGNYEE. The segment covering 12–25 has biased composition (low complexity); that stretch reads ASSNQSVGGSSSSS. The segment covering 55–69 has biased composition (basic and acidic residues); sequence GDERRRAMRRDDPRR. The stretch at 412–436 forms a coiled coil; the sequence is HRIRVEHMERQLANLTGLVQKALVN. Residues 498–548 form a disordered region; the sequence is DIQGIPKSHNPLHAAETKPTKPAIKSSTLPRTSSQERDRLKPPPPPKPIVL. Coiled-coil stretches lie at residues 565 to 594 and 630 to 666; these read EVYNHLRGLQKKAKDLRMEVRTLRRLSQAQ and TRISREEELYKQEVIRLEKDLSDLEGSVENLRGEVIN. Disordered regions lie at residues 754–793, 815–852, 928–1011, and 1028–1070; these read EQRLPPNEPTISEETPRSADISAPDKPIPTPRMGSFALSG, IAQQQQQQQQQQQQQQQQHQHQQLYEIRPEDSASDESA, LHSY…PPNQ, and SANA…ESGN. 5 stretches are compositionally biased toward low complexity: residues 817–837, 952–965, 993–1004, 1028–1039, and 1046–1068; these read QQQQQQQQQQQQQQQQHQHQQ, TSSSTSLANGGSSS, TSSRSPLASPTS, SANANANANSNA, and VGETTSVVSGDTSSGDNSSGNES. Positions 1077-1105 form a coiled coil; it reads VALEMRHQELLKKQKMLQEQYQRLQQMSK.

This chain is Coiled-coil domain-containing protein CG32809, found in Drosophila melanogaster (Fruit fly).